A 1295-amino-acid chain; its full sequence is Unconventional myosin-VI (1295 aa).

Residues Glu2–Glu53 form the Myosin N-terminal SH3-like domain. Residues Lys57–Lys771 form the Myosin motor domain. Gly151–Thr158 serves as a coordination point for ATP. Ser267 carries the post-translational modification Phosphoserine. Residues Tyr273–Phe317 are responsible for slow ATPase activity. Thr405 carries the phosphothreonine modification. A Phosphoserine modification is found at Ser604. The segment at Leu651–Leu673 is actin-binding. The required for binding calmodulin stretch occupies residues Lys782–Ile810. The 30-residue stretch at Arg813–Lys842 folds into the IQ domain. Residues Pro835 to Lys916 form a three-helix bundle region. Residues Lys917–Glu984 form an SAH region. Residues Glu934–Arg955 form a disordered region. Positions Lys1061–Ala1286 are interaction with TAX1BP1 and CALCOCO2/NDP52. The segment at Arg1117–Leu1119 is interaction with OPTN. Phosphoserine is present on Ser1156. Residues Gln1158 to Ala1286 form an interaction with TOM1 region.

It belongs to the TRAFAC class myosin-kinesin ATPase superfamily. Myosin family. As to quaternary structure, homodimer; dimerization seems to implicate the unfolding of the three-helix bundle region creating an additional calmodulin binding site, and cargo binding. Able to function as a monomer under specific conditions in vitro. Forms a complex with CFTR and DAB2 in the apical membrane of epithelial cells. Component of the DISP/DOCK7-induced septin displacement complex, at least composed of DOCK7, LRCH3 and MYO6. Binding to calmodulin through a unique insert, not found in other myosins, located in the neck region between the motor domain and the IQ domain appears to contribute to the directionality reversal. This interaction occurs only if the C-terminal lobe of calmodulin is occupied by calcium. Interaction with F-actin/ACTN1 occurs only at the apical brush border domain of the proximal tubule cells. Interacts with DAB2. In vitro, the C-terminal globular tail binds a C-terminal region of DAB2. Interacts with CFTR. Interacts with CABP5. Interacts (via residues 1158-1286) with TOM1 (via residues 392-463). Interacts (via residues 1060-1285) with OPTN. Interacts (via residues 1060-1285) with TAX1BP1 and CALCOCO2/NDP52. Interacts with TOM1L2. Interacts with CLIC5; may work together in a complex which also includes RDX and MYO6 to stabilize linkages between the plasma membrane and subjacent actin cytoskeleton at the base of stereocilia. Post-translationally, phosphorylation in the motor domain, induced by EGF, results in translocation of MYO6 from the cell surface to membrane ruffles and affects F-actin dynamics. Phosphorylated in vitro by p21-activated kinase (PAK). Expressed in the retina (at protein level).

Its subcellular location is the golgi apparatus. It localises to the trans-Golgi network membrane. The protein localises to the nucleus. It is found in the cytoplasm. The protein resides in the perinuclear region. Its subcellular location is the membrane. It localises to the clathrin-coated pit. The protein localises to the cytoplasmic vesicle. It is found in the clathrin-coated vesicle. The protein resides in the cell projection. Its subcellular location is the filopodium. It localises to the ruffle membrane. The protein localises to the microvillus. It is found in the cytosol. Its function is as follows. Myosins are actin-based motor molecules with ATPase activity. Unconventional myosins serve in intracellular movements. Myosin 6 is a reverse-direction motor protein that moves towards the minus-end of actin filaments. Has slow rate of actin-activated ADP release due to weak ATP binding. Functions in a variety of intracellular processes such as vesicular membrane trafficking and cell migration. Required for the structural integrity of the Golgi apparatus via the p53-dependent pro-survival pathway. Appears to be involved in a very early step of clathrin-mediated endocytosis in polarized epithelial cells. Together with TOM1, mediates delivery of endocytic cargo to autophagosomes thereby promoting autophagosome maturation and driving fusion with lysosomes. Links TOM1 with autophagy receptors, such as TAX1BP1; CALCOCO2/NDP52 and OPTN. May act as a regulator of F-actin dynamics. As part of the DISP complex, may regulate the association of septins with actin and thereby regulate the actin cytoskeleton. May play a role in transporting DAB2 from the plasma membrane to specific cellular targets. May play a role in the extension and network organization of neurites. Required for structural integrity of inner ear hair cells. Required for the correct localization of CLIC5 and RDX at the stereocilium base. Modulates RNA polymerase II-dependent transcription. The chain is Unconventional myosin-VI from Bos taurus (Bovine).